We begin with the raw amino-acid sequence, 28 residues long: Small integral membrane protein 47 (28 aa).

Residues 7–24 (VTLAMALFTILTSIYFFN) traverse the membrane as a helical segment.

The protein localises to the membrane. The sequence is that of Small integral membrane protein 47 from Homo sapiens (Human).